Reading from the N-terminus, the 160-residue chain is Zinc finger A20 and AN1 domain-containing stress-associated protein 6 (160 aa).

The segment at P18–T52 adopts an A20-type zinc-finger fold. Zn(2+) is bound by residues C24, C28, C40, and C43. Residues E73–P94 form a disordered region. The AN1-type zinc-finger motif lies at K95–G141. Zn(2+) is bound by residues C101, C104, C115, C117, C122, H125, H131, and C133.

May be involved in environmental stress response. The sequence is that of Zinc finger A20 and AN1 domain-containing stress-associated protein 6 (SAP6) from Oryza sativa subsp. japonica (Rice).